The following is a 313-amino-acid chain: Homeobox protein CDX-2 (313 aa).

S60 bears the Phosphoserine mark. Residues 113 to 153 (HAHHHPHHHPHHPAAAPSCASGLLQTLNPGPPGPAATGAAE) form a disordered region. A compositionally biased stretch (basic residues) spans 114 to 124 (AHHHPHHHPHH). An interaction with DNA region spans residues 185-215 (KDKYRVVYTDHQRLELEKEFHYSRYITIRRK). The segment at residues 185–244 (KDKYRVVYTDHQRLELEKEFHYSRYITIRRKAELAATLGLSERQVKIWFQNRRAKERKIN) is a DNA-binding region (homeobox). An interaction with 5-mCpG DNA region spans residues 227–241 (RQVKIWFQNRRAKER). Residues 242–313 (KINKKKLQQQ…GGVLNPTVTQ (72 aa)) form a disordered region. Composition is skewed to low complexity over residues 249 to 261 (QQQQQQQQQQQLA) and 271 to 300 (QPGSLRSVPEPLSPVSSLQGSVPGSVPGVL). Phosphoserine is present on S283. The 4S motif; modulates transactivation activity and protein stability signature appears at 283–295 (SPVSSLQGSVPGS).

The protein belongs to the Caudal homeobox family. As to quaternary structure, can bind DNA as a monomer or homodimer. Ubiquitinated, leading to its degradation by the proteasome. In terms of processing, phosphorylation at Ser-60 reduces transactivation capacity. Phosphorylation at Ser-283 reduces transactivation capacity and also increases ubiquitin-dependent proteasome degradation. As to expression, expressed in the intestine.

The protein resides in the nucleus. Its function is as follows. Transcription factor which regulates the transcription of multiple genes expressed in the intestinal epithelium. Binds to the promoter of the intestinal sucrase-isomaltase SI and activates SI transcription. Binds to the DNA sequence 5'-ATAAAAACTTAT-3' in the promoter region of VDR and activates VDR transcription. Binds to and activates transcription of LPH. Activates transcription of CLDN2 and intestinal mucin MUC2. Binds to the 5'-AATTTTTTACAACACCT-3' DNA sequence in the promoter region of CA1 and activates CA1 transcription. Important in broad range of functions from early differentiation to maintenance of the intestinal epithelial lining of both the small and large intestine. Binds preferentially to methylated DNA. The protein is Homeobox protein CDX-2 (CDX2) of Mesocricetus auratus (Golden hamster).